A 518-amino-acid polypeptide reads, in one-letter code: Transcription factor TT8 (518 aa).

Coiled coils occupy residues 220–240 (EVHE…MSEE) and 405–428 (VNHL…KRTR). The bHLH domain maps to 359-408 (REDLSHVVAERRRREKLNEKFITLRSMVPFVTKMDKVSILGDTIAYVNHL).

This sequence belongs to the bHLH protein family. Homodimer. Interacts with MYB4, MYB5, MYB6, MYB82, MYB113, MYB114, MYB75/PAP1, MYB90/PAP2, and TT2. As to expression, buds, flowers and developing siliques, but not in leaves, stems and roots.

Its subcellular location is the nucleus. Its function is as follows. Transcription activator, when associated with MYB75/PAP1 or MYB90/PAP2. Involved in the control of flavonoid pigmentation. Plays a key role in regulating leucoanthocyanidin reductase (BANYULS) and dihydroflavonol-4-reductase (DFR). Not required for leucoanthocyanidin dioxygenase (LDOX) expression. This Arabidopsis thaliana (Mouse-ear cress) protein is Transcription factor TT8.